A 514-amino-acid polypeptide reads, in one-letter code: Probable transposase for insertion sequence element IS1353 (514 aa).

Residues 172-216 are a coiled coil; that stretch reads KGDTSLEQRHEALLRELAELESQNQRLRMENAILEKASELIKKDM. The 165-residue stretch at 346 to 510 folds into the Integrase catalytic domain; sequence HASAPNTKWL…SPIEYRHAVG (165 aa). 2 residues coordinate Mg(2+): Asp-357 and Asp-417.

Belongs to the transposase 8 family.

Probably involved in the transposition of insertion sequence IS1353. This chain is Probable transposase for insertion sequence element IS1353, found in Shigella flexneri.